A 449-amino-acid chain; its full sequence is UMP-CMP kinase 2, mitochondrial (449 aa).

The N-terminal 98 residues, 1-98, are a transit peptide targeting the mitochondrion; the sequence is MAFARRLLRG…VRAARLHQRL (98 aa). 259–266 contacts ATP; the sequence is GLDATGKT. Residues 380 to 412 are a coiled coil; that stretch reads EERLQRLQGRGMEKTREEAELEANSVFRQKVEM.

This sequence belongs to the thymidylate kinase family. As to expression, high levels are observed in myeloid, lymphoid and mesenchymal tissues.

It is found in the mitochondrion. It carries out the reaction CMP + ATP = CDP + ADP. It catalyses the reaction dCMP + ATP = dCDP + ADP. The enzyme catalyses a 2'-deoxyribonucleoside 5'-diphosphate + ATP = a 2'-deoxyribonucleoside 5'-triphosphate + ADP. The catalysed reaction is a ribonucleoside 5'-diphosphate + ATP = a ribonucleoside 5'-triphosphate + ADP. Its function is as follows. Mitochondrial nucleotide monophosphate kinase needed for salvage dNTP synthesis that mediates immunomodulatory and antiviral activities through IFN-dependent and IFN-independent pathways. Restricts the replication of multiple viruses including flaviviruses or coronaviruses. Together with viperin/RSAD2 and ddhCTP, suppresses the replication of several coronaviruses through inhibition of the viral RNA-dependent RNA polymerase activities. Concerning flaviviruses, restricts RNA translation when localized to the mitochondria independently of its kinase activity. Is able to phosphorylate dUMP, dCMP, CMP, UMP and monophosphates of the pyrimidine nucleoside analogs ddC, dFdC, araC, BVDU and FdUrd with ATP as phosphate donor. Efficacy is highest for dUMP followed by dCMP while CMP and UMP are poor substrates. Controls therefore mitochondrial DNA synthesis by supplying required deoxyribonucleotides. CMPK2-dependent mitochondrial DNA synthesis is necessary for the production of oxidized mitochondrial DNA fragments after exposure to NLRP3 activators. In turn, cytosolic oxidized mtDNA associates with the NLRP3 inflammasome complex and is required for its activation. This chain is UMP-CMP kinase 2, mitochondrial (CMPK2), found in Homo sapiens (Human).